The sequence spans 682 residues: 1,4-alpha-glucan-branching enzyme (682 aa).

Positions 88 and 124 each coordinate (1,4-alpha-D-glucosyl)n. Aspartate 342 (nucleophile) is an active-site residue. The active-site Proton donor is the glutamate 397.

It belongs to the glycosyl hydrolase 13 family. GlgB subfamily.

It is found in the cytoplasm. The enzyme catalyses Transfers a segment of a (1-&gt;4)-alpha-D-glucan chain to a primary hydroxy group in a similar glucan chain.. The protein operates within glycan biosynthesis; glycogen biosynthesis. In terms of biological role, glycogen-branching enzyme participates in the glycogen biosynthetic process along with glycogenin and glycogen synthase. Generates alpha-1,6-glucosidic branches from alpha-1,4-linked glucose chains, to increase solubility of the glycogen polymer. This Cryptococcus neoformans var. neoformans serotype D (strain B-3501A) (Filobasidiella neoformans) protein is 1,4-alpha-glucan-branching enzyme (GLC3).